The sequence spans 505 residues: Lysine--tRNA ligase (505 aa).

Glu-403 and Glu-410 together coordinate Mg(2+).

Belongs to the class-II aminoacyl-tRNA synthetase family. In terms of assembly, homodimer. Mg(2+) serves as cofactor.

The protein resides in the cytoplasm. The enzyme catalyses tRNA(Lys) + L-lysine + ATP = L-lysyl-tRNA(Lys) + AMP + diphosphate. This Methanospirillum hungatei JF-1 (strain ATCC 27890 / DSM 864 / NBRC 100397 / JF-1) protein is Lysine--tRNA ligase.